A 447-amino-acid polypeptide reads, in one-letter code: Methyl-coenzyme M reductase I subunit beta (447 aa).

Position 371 (Tyr371) interacts with coenzyme M. Gly373 serves as a coordination point for coenzyme B.

Belongs to the methyl-coenzyme M reductase beta subunit family. In terms of assembly, MCR is a hexamer of two alpha, two beta, and two gamma chains, forming a dimer of heterotrimers. Coenzyme F430 is required as a cofactor.

The protein localises to the cytoplasm. It catalyses the reaction coenzyme B + methyl-coenzyme M = methane + coenzyme M-coenzyme B heterodisulfide. It functions in the pathway one-carbon metabolism; methyl-coenzyme M reduction; methane from methyl-coenzyme M: step 1/1. In terms of biological role, component of the methyl-coenzyme M reductase (MCR) I that catalyzes the reductive cleavage of methyl-coenzyme M (CoM-S-CH3 or 2-(methylthio)ethanesulfonate) using coenzyme B (CoB or 7-mercaptoheptanoylthreonine phosphate) as reductant which results in the production of methane and the mixed heterodisulfide of CoB and CoM (CoM-S-S-CoB). This is the final step in methanogenesis. This is Methyl-coenzyme M reductase I subunit beta (mcrB) from Methanocaldococcus jannaschii (strain ATCC 43067 / DSM 2661 / JAL-1 / JCM 10045 / NBRC 100440) (Methanococcus jannaschii).